We begin with the raw amino-acid sequence, 172 residues long: Translation initiation factor IF-3 (172 aa).

The protein belongs to the IF-3 family. In terms of assembly, monomer.

The protein resides in the cytoplasm. Its function is as follows. IF-3 binds to the 30S ribosomal subunit and shifts the equilibrium between 70S ribosomes and their 50S and 30S subunits in favor of the free subunits, thus enhancing the availability of 30S subunits on which protein synthesis initiation begins. In Thermotoga maritima (strain ATCC 43589 / DSM 3109 / JCM 10099 / NBRC 100826 / MSB8), this protein is Translation initiation factor IF-3.